We begin with the raw amino-acid sequence, 591 residues long: L-fucose isomerase (591 aa).

Active-site proton acceptor residues include Glu337 and Asp361. Mn(2+) is bound by residues Glu337, Asp361, and His528.

This sequence belongs to the L-fucose isomerase family. As to quaternary structure, homohexamer. Requires Mn(2+) as cofactor.

The protein resides in the cytoplasm. The catalysed reaction is L-fucose = L-fuculose. The protein operates within carbohydrate degradation; L-fucose degradation; L-lactaldehyde and glycerone phosphate from L-fucose: step 1/3. Its function is as follows. Converts the aldose L-fucose into the corresponding ketose L-fuculose. This is L-fucose isomerase from Shigella dysenteriae serotype 1 (strain Sd197).